Here is a 400-residue protein sequence, read N- to C-terminus: 3-phenylpropionate/cinnamic acid dioxygenase ferredoxin--NAD(+) reductase component (400 aa).

5-36 (TIIIVGGGQAAAMAAASLRQQGFTGELHLFSD) is a binding site for FAD. Position 146–174 (146–174 (SVVIVGAGTIGLELAASATQRRCKVTVIE)) interacts with NAD(+).

This sequence belongs to the bacterial ring-hydroxylating dioxygenase ferredoxin reductase family. This dioxygenase system consists of four proteins: the two subunits of the hydroxylase component (HcaE and HcaF), a ferredoxin (HcaC) and a ferredoxin reductase (HcaD). Requires FAD as cofactor.

The enzyme catalyses 2 reduced [2Fe-2S]-[ferredoxin] + NAD(+) + H(+) = 2 oxidized [2Fe-2S]-[ferredoxin] + NADH. It functions in the pathway aromatic compound metabolism; 3-phenylpropanoate degradation. Its function is as follows. Part of the multicomponent 3-phenylpropionate dioxygenase, that converts 3-phenylpropionic acid (PP) and cinnamic acid (CI) into 3-phenylpropionate-dihydrodiol (PP-dihydrodiol) and cinnamic acid-dihydrodiol (CI-dihydrodiol), respectively. This is 3-phenylpropionate/cinnamic acid dioxygenase ferredoxin--NAD(+) reductase component from Escherichia coli (strain 55989 / EAEC).